Here is a 343-residue protein sequence, read N- to C-terminus: Heat-inducible transcription repressor HrcA (343 aa).

The protein belongs to the HrcA family.

In terms of biological role, negative regulator of class I heat shock genes (grpE-dnaK-dnaJ and groELS operons). Prevents heat-shock induction of these operons. This chain is Heat-inducible transcription repressor HrcA, found in Lysinibacillus sphaericus (Bacillus sphaericus).